The chain runs to 98 residues: DNA-binding protein Fis (98 aa).

The segment at residues 74–93 is a DNA-binding region (H-T-H motif); that stretch reads QTRAALMMGINRGTLRKKLK.

It belongs to the transcriptional regulatory Fis family. Homodimer.

Activates ribosomal RNA transcription. Plays a direct role in upstream activation of rRNA promoters. The chain is DNA-binding protein Fis from Yersinia enterocolitica serotype O:8 / biotype 1B (strain NCTC 13174 / 8081).